We begin with the raw amino-acid sequence, 90 residues long: DNA-directed RNA polymerase subunit omega (90 aa).

This sequence belongs to the RNA polymerase subunit omega family. The RNAP catalytic core consists of 2 alpha, 1 beta, 1 beta' and 1 omega subunit. When a sigma factor is associated with the core the holoenzyme is formed, which can initiate transcription.

The enzyme catalyses RNA(n) + a ribonucleoside 5'-triphosphate = RNA(n+1) + diphosphate. Functionally, promotes RNA polymerase assembly. Latches the N- and C-terminal regions of the beta' subunit thereby facilitating its interaction with the beta and alpha subunits. The chain is DNA-directed RNA polymerase subunit omega from Beutenbergia cavernae (strain ATCC BAA-8 / DSM 12333 / CCUG 43141 / JCM 11478 / NBRC 16432 / NCIMB 13614 / HKI 0122).